A 117-amino-acid polypeptide reads, in one-letter code: Ubiquitin-like protein 3 (117 aa).

The Ubiquitin-like domain maps to 10 to 88; that stretch reads INLRLILVSG…PFGKTTVMHL (79 aa). Cys113 is lipidated: S-palmitoyl cysteine. Cysteine methyl ester is present on Cys114. Residue Cys114 is the site of S-geranylgeranyl cysteine attachment. Residues 115 to 117 constitute a propeptide, removed in mature form; that stretch reads VIL.

Its subcellular location is the cell membrane. The polypeptide is Ubiquitin-like protein 3 (Ubl3) (Mus musculus (Mouse)).